The sequence spans 491 residues: MDPFVVLVLCLSFLLVLSLWRQRSARGNLPPGPTPLPIIGNYHLIDMKDIGQCLTNFSKTYGPVFTLYFGSQPIVVLHGYEAIKEALIDHGEEFSGRGRIPVFDKVSTGKGIGFSHGNVWKATRVFTVNTLRNLGMGKRTIENKVQEEAQWLMKELKKTNGSPCDPQFIIGCAPCNVICSIVFQNRFDYKDKDFLSLIGKVNECTEILSSPGCQIFNAVPILIDYCPGSHNKLFKNHTWIKSYLLGKIKEHEESLDVTNPRDFIDYFLIQRRQKNGIEHMDYTIEHLATLVTDLVFGGTETLSSTMRFALLLLMKHTHITAKVQEEIDNVIGRHRSPCMQDRNHMPYTNAMVHEVQRYIDLGPNGVVHEVTCDTKFRNYFIPKGTQVMTSLTSVLHDSTEFPNPEVFDPGHFLDDNGNFKKSDYFVPFSAGKRICVGESLARMELFLFLTTILQNFKLKPLVDPKDIDMTPKHSGFSKIPPNFQMCFIPVE.

The signal sequence occupies residues 1–25 (MDPFVVLVLCLSFLLVLSLWRQRSA). C435 contacts heme.

The protein belongs to the cytochrome P450 family. It depends on heme as a cofactor. As to expression, liver, brain, kidney, and intestine, with trace amounts in lung and heart. Expressed throughout the intestinal tract, with higher expression levels in jejunum, cecum and colon.

Its subcellular location is the endoplasmic reticulum membrane. The protein localises to the microsome membrane. It catalyses the reaction (5Z,8Z,11Z,14Z)-eicosatetraenoate + reduced [NADPH--hemoprotein reductase] + O2 = 16(R)-hydroxy-(5Z,8Z,11Z,14Z)-eicosatetraenoate + oxidized [NADPH--hemoprotein reductase] + H2O + H(+). The enzyme catalyses (5Z,8Z,11Z,14Z)-eicosatetraenoate + reduced [NADPH--hemoprotein reductase] + O2 = 16(S)-hydroxy-(5Z,8Z,11Z,14Z)-eicosatetraenoate + oxidized [NADPH--hemoprotein reductase] + H2O + H(+). It carries out the reaction (5Z,8Z,11Z,14Z)-eicosatetraenoate + reduced [NADPH--hemoprotein reductase] + O2 = (14R,15S)-epoxy-(5Z,8Z,11Z)-eicosatrienoate + oxidized [NADPH--hemoprotein reductase] + H2O + H(+). The catalysed reaction is (5Z,8Z,11Z,14Z)-eicosatetraenoate + reduced [NADPH--hemoprotein reductase] + O2 = (14S,15R)-epoxy-(5Z,8Z,11Z)-eicosatrienoate + oxidized [NADPH--hemoprotein reductase] + H2O + H(+). It participates in lipid metabolism; arachidonate metabolism. Functionally, a cytochrome P450 monooxygenase that may play a major role in the metabolism of arachidonic acid in the intestinal tract. Exhibits regioselective hydroxylase and epoxidase activity toward arachidonic acid, producing 16(R)-hydroxyeicosatetraenoic acid (HETE) and (14R,15S)-epoxyeicosatrienoic acid (EpETrE) as major products. Mechanistically, uses molecular oxygen inserting one oxygen atom into a substrate, and reducing the second into a water molecule, with two electrons provided by NADPH via cytochrome P450 reductase (CPR; NADPH-ferrihemoprotein reductase). This chain is Cytochrome P450 2C40, found in Mus musculus (Mouse).